Consider the following 325-residue polypeptide: Cytochrome c1, heme protein, mitochondrial (325 aa).

The transit peptide at methionine 1–alanine 84 directs the protein to the mitochondrion. Over serine 85–glutamate 281 the chain is Mitochondrial intermembrane. The Cytochrome c domain maps to threonine 108–aspartate 209. 4 residues coordinate heme c: cysteine 121, cysteine 124, histidine 125, and methionine 244. The helical transmembrane segment at histidine 282–lysine 315 threads the bilayer. Residues serine 316 to lysine 325 are Mitochondrial matrix-facing.

It belongs to the cytochrome c family. As to quaternary structure, component of the ubiquinol-cytochrome c oxidoreductase (cytochrome b-c1 complex, complex III, CIII), a multisubunit enzyme composed of 11 subunits. The complex is composed of 3 respiratory subunits cytochrome b, cytochrome c1 and Rieske protein UQCRFS1, 2 core protein subunits UQCRC1/QCR1 and UQCRC2/QCR2, and 6 low-molecular weight protein subunits UQCRH/QCR6, UQCRB/QCR7, UQCRQ/QCR8, UQCR10/QCR9, UQCR11/QCR10 and subunit 9, the cleavage product of Rieske protein UQCRFS1. The complex exists as an obligatory dimer and forms supercomplexes (SCs) in the inner mitochondrial membrane with NADH-ubiquinone oxidoreductase (complex I, CI) and cytochrome c oxidase (complex IV, CIV), resulting in different assemblies (supercomplex SCI(1)III(2)IV(1) and megacomplex MCI(2)III(2)IV(2)). Interacts with FLVCR2; this interaction occurs in the absence of heme and is disrupted upon heme binding. It depends on heme c as a cofactor.

Its subcellular location is the mitochondrion inner membrane. It catalyses the reaction a quinol + 2 Fe(III)-[cytochrome c](out) = a quinone + 2 Fe(II)-[cytochrome c](out) + 2 H(+)(out). Functionally, component of the ubiquinol-cytochrome c oxidoreductase, a multisubunit transmembrane complex that is part of the mitochondrial electron transport chain which drives oxidative phosphorylation. The respiratory chain contains 3 multisubunit complexes succinate dehydrogenase (complex II, CII), ubiquinol-cytochrome c oxidoreductase (cytochrome b-c1 complex, complex III, CIII) and cytochrome c oxidase (complex IV, CIV), that cooperate to transfer electrons derived from NADH and succinate to molecular oxygen, creating an electrochemical gradient over the inner membrane that drives transmembrane transport and the ATP synthase. The cytochrome b-c1 complex catalyzes electron transfer from ubiquinol to cytochrome c, linking this redox reaction to translocation of protons across the mitochondrial inner membrane, with protons being carried across the membrane as hydrogens on the quinol. In the process called Q cycle, 2 protons are consumed from the matrix, 4 protons are released into the intermembrane space and 2 electrons are passed to cytochrome c. Cytochrome c1 is a catalytic core subunit containing a c-type heme. It transfers electrons from the [2Fe-2S] iron-sulfur cluster of the Rieske protein to cytochrome c. This chain is Cytochrome c1, heme protein, mitochondrial (CYC1), found in Bos taurus (Bovine).